Here is a 293-residue protein sequence, read N- to C-terminus: NAD kinase (293 aa).

Catalysis depends on aspartate 72, which acts as the Proton acceptor. Residues 72–73 (DG), 146–147 (ND), arginine 157, arginine 174, aspartate 176, 187–192 (TAYALS), and glutamine 247 each bind NAD(+).

Belongs to the NAD kinase family. Requires a divalent metal cation as cofactor.

The protein resides in the cytoplasm. It catalyses the reaction NAD(+) + ATP = ADP + NADP(+) + H(+). In terms of biological role, involved in the regulation of the intracellular balance of NAD and NADP, and is a key enzyme in the biosynthesis of NADP. Catalyzes specifically the phosphorylation on 2'-hydroxyl of the adenosine moiety of NAD to yield NADP. This Teredinibacter turnerae (strain ATCC 39867 / T7901) protein is NAD kinase.